A 486-amino-acid polypeptide reads, in one-letter code: Cysteine--tRNA ligase (486 aa).

C30 contacts Zn(2+). Positions 32-42 (PTVYDRAHLGN) match the 'HIGH' region motif. Residues C221, H246, and E250 each contribute to the Zn(2+) site. Positions 279–283 (KMSKS) match the 'KMSKS' region motif. An ATP-binding site is contributed by K282.

Belongs to the class-I aminoacyl-tRNA synthetase family. As to quaternary structure, monomer. The cofactor is Zn(2+).

The protein localises to the cytoplasm. The catalysed reaction is tRNA(Cys) + L-cysteine + ATP = L-cysteinyl-tRNA(Cys) + AMP + diphosphate. The chain is Cysteine--tRNA ligase from Cereibacter sphaeroides (strain ATCC 17029 / ATH 2.4.9) (Rhodobacter sphaeroides).